The following is a 528-amino-acid chain: Peptide chain release factor 3 (528 aa).

A tr-type G domain is found at 9–280 (RRRRTFAIIS…LKLAPAPAPR (272 aa)). Residues 18–25 (SHPDAGKT), 86–90 (DTPGH), and 140–143 (NKLD) contribute to the GTP site.

This sequence belongs to the TRAFAC class translation factor GTPase superfamily. Classic translation factor GTPase family. PrfC subfamily.

It localises to the cytoplasm. Functionally, increases the formation of ribosomal termination complexes and stimulates activities of RF-1 and RF-2. It binds guanine nucleotides and has strong preference for UGA stop codons. It may interact directly with the ribosome. The stimulation of RF-1 and RF-2 is significantly reduced by GTP and GDP, but not by GMP. This Symbiobacterium thermophilum (strain DSM 24528 / JCM 14929 / IAM 14863 / T) protein is Peptide chain release factor 3.